The primary structure comprises 601 residues: Aspartate--tRNA(Asp/Asn) ligase (601 aa).

An L-aspartate-binding site is contributed by Glu173. Positions 197–200 are aspartate; that stretch reads QLFK. Residue Arg219 coordinates L-aspartate. Residues 219-221 and Gln228 each bind ATP; that span reads RDE. His456 contributes to the L-aspartate binding site. Glu490 contacts ATP. Residue Arg497 coordinates L-aspartate. Residue 542–545 coordinates ATP; that stretch reads GWDR. Positions 566–601 are disordered; that stretch reads GGGYDPLTQAPAPITAEQRRESGVDAVPDDETAPQA. The segment covering 592 to 601 has biased composition (acidic residues); sequence VPDDETAPQA.

Belongs to the class-II aminoacyl-tRNA synthetase family. Type 1 subfamily. As to quaternary structure, homodimer.

Its subcellular location is the cytoplasm. The enzyme catalyses tRNA(Asx) + L-aspartate + ATP = L-aspartyl-tRNA(Asx) + AMP + diphosphate. Its function is as follows. Aspartyl-tRNA synthetase with relaxed tRNA specificity since it is able to aspartylate not only its cognate tRNA(Asp) but also tRNA(Asn). Reaction proceeds in two steps: L-aspartate is first activated by ATP to form Asp-AMP and then transferred to the acceptor end of tRNA(Asp/Asn). In Beutenbergia cavernae (strain ATCC BAA-8 / DSM 12333 / CCUG 43141 / JCM 11478 / NBRC 16432 / NCIMB 13614 / HKI 0122), this protein is Aspartate--tRNA(Asp/Asn) ligase.